A 499-amino-acid polypeptide reads, in one-letter code: ADP,ATP carrier protein 5 (499 aa).

A run of 11 helical transmembrane segments spans residues 25–45, 61–81, 93–113, 148–168, 183–203, 223–243, 286–306, 327–347, 356–376, 380–400, and 468–488; these read LGKFIPMSTLMFCILFNQNVL, IAGFAKVYCVTPAAALFVIIY, IFYYLSAFFISFFVLFTFVIY, YIVYYSLAELWPNIFYVLLFW, FYTLFSLFGNSSLILVGFLMM, ITLVQVSTTIVAIVAIICCLL, LWLLLICSAAFGFAINLVEAV, LYILWTGVAIMVMTIIGNNIM, AVISPVIIMVTGILFFVLIVF, ILSLFDGAILMSPLALAVSIG, and LISPILMVVFTFVCLAWIYAV.

It belongs to the ADP/ATP translocase tlc family.

The protein localises to the cell membrane. Provides the rickettsial cell with host ATP in exchange for rickettsial ADP. This is an obligate exchange system. This energy acquiring activity is an important component of rickettsial parasitism. This Rickettsia conorii (strain ATCC VR-613 / Malish 7) protein is ADP,ATP carrier protein 5 (tlcE).